The following is a 506-amino-acid chain: Nondiscriminating glutamyl-tRNA synthetase EARS2, mitochondrial (506 aa).

A mitochondrion-targeting transit peptide spans 1-41 (MAALLRRLLQRGRPLAASGRRVGRREARLGTGPGVAVRVRF). Residue 40-42 (RFA) coordinates L-glutamate. Positions 45–53 (PTGFLHLGG) match the 'HIGH' region motif. His-50 lines the ATP pocket. L-glutamate contacts are provided by residues Glu-76, 228 to 232 (YHLAC), and Arg-246. Residue Glu-249 coordinates ATP. Lys-256 carries the N6-succinyllysine modification. 284–288 (KLSKR) lines the ATP pocket. Positions 284-288 (KLSKR) match the 'KMSKS' region motif. An N6-acetyllysine modification is found at Lys-486.

Belongs to the class-I aminoacyl-tRNA synthetase family. Glutamate--tRNA ligase type 1 subfamily.

The protein resides in the mitochondrion matrix. The catalysed reaction is tRNA(Glx) + L-glutamate + ATP = L-glutamyl-tRNA(Glx) + AMP + diphosphate. It catalyses the reaction tRNA(Glu) + L-glutamate + ATP = L-glutamyl-tRNA(Glu) + AMP + diphosphate. It carries out the reaction tRNA(Gln) + L-glutamate + ATP = L-glutamyl-tRNA(Gln) + AMP + diphosphate. Non-discriminating glutamyl-tRNA synthetase that catalyzes aminoacylation of both mitochondrial tRNA(Glu) and tRNA(Gln) and participates in RNA aminoacylation for mitochondrial protein translation. Attachs glutamate to tRNA(Glu) or tRNA(Gln) in a two-step reaction: glutamate is first activated by ATP to form Glu-AMP and then transferred to the acceptor end of tRNA(Glu) or tRNA(Gln). In vitro, cytoplasmic tRNA(Gln) is slightly glutamylated, but with low activity. The chain is Nondiscriminating glutamyl-tRNA synthetase EARS2, mitochondrial from Macaca fascicularis (Crab-eating macaque).